The primary structure comprises 359 residues: MTSTSKGILRPFLIVCIILGCFMACLLIYIKPTNSWIFSPMESASSVLKMKNFFSTKTDYFNETTILVWVWPFGQTFDLTSCQAMFNIQGCHLTTDRSLYNKSHAVLIHHRDISWDLTNLPQQARPPFQKWIWMNLESPTHTPQKSGIEHLFNLTLTYRRDSDIQVPYGFLTVSTNPFVFEVPSKEKLVCWVVSNWNPEHARVKYYNELSKSIEIHTYGQAFGEYVNDKNLIPTISTCKFYLSFENSIHKDYITEKLYNAFLAGSVPVVLGPSRENYENYIPADSFIHVEDYNSPSELAKYLKEVDKNNKLYLSYFNWRKDFTVNLPRFWESHACLACDHVKRHQEYKSVGNLEKWFWN.

The Cytoplasmic segment spans residues 1 to 11 (MTSTSKGILRP). The chain crosses the membrane as a helical; Signal-anchor for type II membrane protein span at residues 12-32 (FLIVCIILGCFMACLLIYIKP). Residues 33 to 359 (TNSWIFSPME…VGNLEKWFWN (327 aa)) are Lumenal-facing. The N-linked (GlcNAc...) asparagine glycan is linked to Asn-62. The segment at 63 to 168 (ETTILVWVWP…RRDSDIQVPY (106 aa)) is acceptor-binding. A beta-D-galactosyl-(1-&gt;4)-N-acetyl-beta-D-glucosaminyl derivative is bound at residue Gln-75. Intrachain disulfides connect Cys-82-Cys-335, Cys-91-Cys-338, and Cys-190-Cys-238. Asn-101 carries an N-linked (GlcNAc...) asparagine glycan. Glu-137 is a binding site for a beta-D-galactosyl-(1-&gt;4)-N-acetyl-beta-D-glucosaminyl derivative. Glu-137 acts as the Nucleophile in catalysis. Glu-137 lines the GDP-beta-L-fucose pocket. Asn-153 is a glycosylation site (N-linked (GlcNAc...) asparagine). GDP-beta-L-fucose-binding residues include Tyr-168, Val-192, Ser-194, Asn-195, Arg-202, Val-226, Tyr-241, Asn-246, Tyr-252, Glu-255, and Lys-256. The donor-binding stretch occupies residues 169–326 (GFLTVSTNPF…NWRKDFTVNL (158 aa)). Positions 327 to 359 (PRFWESHACLACDHVKRHQEYKSVGNLEKWFWN) are acceptor-binding.

This sequence belongs to the glycosyltransferase 10 family. In terms of assembly, homodimer. N-glycosylated with complex-type N-glycans. The glycan alpha-D-Man-(1-&gt;3)-beta-D-Man-(1-&gt;4)-GlcNAc-(1-&gt;4)-GlcNAc is attached at Asn-153. Strongly expressed in forebrain and stomach, lower expression in spleen and peripheral blood leukocytes, and no expression in small intestine, colon, liver, lung, kidney, adrenal cortex or uterus. Highly expressed in granulocytes. Not expressed in monocytes.

The protein resides in the golgi apparatus. It localises to the trans-Golgi network membrane. The protein localises to the golgi apparatus membrane. It carries out the reaction a beta-D-galactosyl-(1-&gt;4)-N-acetyl-beta-D-glucosaminyl derivative + GDP-beta-L-fucose = a beta-D-galactosyl-(1-&gt;4)-[alpha-L-fucosyl-(1-&gt;3)]-N-acetyl-beta-D-glucosaminyl derivative + GDP + H(+). The enzyme catalyses an alpha-Neu5Ac-(2-&gt;3)-beta-D-Gal-(1-&gt;4)-beta-D-GlcNAc-(1-&gt;3)-beta-D-Gal-(1-&gt;4)-beta-D-GlcNAc derivative + GDP-beta-L-fucose = an alpha-Neu5Ac-(2-&gt;3)-beta-D-Gal-(1-&gt;4)-beta-D-GlcNAc-(1-&gt;3)-beta-D-Gal-(1-&gt;4)-[alpha-L-Fuc-(1-&gt;3)]-beta-D-GlcNAc derivative + GDP + H(+). It catalyses the reaction alpha-N-glycoloylneuraminosyl-(2-&gt;3)-beta-D-galactosyl-(1-&gt;4)-N-acetyl-beta-D-glucosaminyl-(1-&gt;3)-beta-D-galactosyl-(1-&gt;4)-N-acetyl-beta-D-glucosaminyl-(1-&gt;3)-beta-D-galactosyl-(1-&gt;4)-beta-D-glucosyl-(1&lt;-&gt;1')-ceramide + GDP-beta-L-fucose = alpha-N-glycoloylneuraminosyl-(2-&gt;3)-beta-D-galactosyl-(1-&gt;4)-N-acetyl-beta-D-glucosaminyl-(1-&gt;3)-beta-D-galactosyl-(1-&gt;4)-[alpha-L-fucosyl-(1-&gt;3)]-N-acetyl-beta-D-glucosaminyl-(1-&gt;3)-beta-D-galactosyl-(1-&gt;4)-beta-D-glucosyl-(1&lt;-&gt;1')-ceramide + GDP + H(+). The catalysed reaction is alpha-D-galactosyl-(1-&gt;3)-beta-D-galactosyl-(1-&gt;4)-N-acetyl-beta-D-glucosaminyl-(1-&gt;3)-beta-D-galactosyl-(1-&gt;4)-beta-D-glucosyl-(1&lt;-&gt;1')-ceramide + GDP-beta-L-fucose = a neolactoside IV(3)-alpha-Gal,III(3)-alpha-Fuc-nLc4Cer + GDP + H(+). It carries out the reaction a neolactoside nLc4Cer + GDP-beta-L-fucose = a neolactoside III(3)-alpha-Fuc-nLc4Cer + GDP + H(+). The enzyme catalyses an N-acetyl-alpha-neuraminyl-(2-&gt;3)-beta-D-galactosyl-(1-&gt;4)-N-acetyl-beta-D-glucosaminyl derivative + GDP-beta-L-fucose = an alpha-Neu5Ac-(2-&gt;3)-beta-D-Gal-(1-&gt;4)-[alpha-L-Fuc-(1-&gt;3)]-beta-D-GlcNAc derivative + GDP + H(+). It catalyses the reaction beta-D-Gal-(1-&gt;4)-beta-D-GlcNAc-(1-&gt;3)-beta-D-Gal-(1-&gt;4)-D-Glc + GDP-beta-L-fucose = beta-D-Gal-(1-&gt;4)-[alpha-L-Fuc-(1-&gt;3)]-beta-D-GlcNAc-(1-&gt;3)-beta-D-Gal-(1-&gt;4)-D-Glc + GDP + H(+). The catalysed reaction is an alpha-L-Fuc-(1-&gt;2)-beta-D-Gal-(1-&gt;4)-beta-D-GlcNAc derivative + GDP-beta-L-fucose = an alpha-L-Fuc-(1-&gt;2)-beta-D-Gal-(1-&gt;4)-[alpha-L-Fuc-(1-&gt;3)]-beta-D-GlcNAc derivative + GDP + H(+). The protein operates within protein modification; protein glycosylation. Its pathway is glycolipid biosynthesis. With respect to regulation, activated by Mn2+. In terms of biological role, catalyzes alpha(1-&gt;3) linkage of fucosyl moiety transferred from GDP-beta-L-fucose to N-acetyl glucosamine (GlcNAc) within type 2 lactosamine (LacNAc, beta-D-Gal-(1-&gt;4)-beta-D-GlcNAc-) glycan attached to glycolipids and N- or O-linked glycoproteins. Fucosylates distal type 2 LacNAc and its fucosylated (H-type 2 LacNAc) and sialylated (sialyl-type 2 LacNAc) derivatives to form Lewis x (Lex) (CD15) and Lewis y (Ley) antigenic epitopes involved in cell adhesion and differentiation. Generates Lex epitopes in the brain, presumably playing a role in the maintenance of neuronal stemness and neurite outgrowth in progenitor neural cells. Fucosylates the internal type 2 LacNAc unit of the polylactosamine chain to form VIM-2 antigen that serves as recognition epitope for SELE. Can also modify milk oligosaccharides, in particular type 2 tetrasaccharide LNnT. This is 4-galactosyl-N-acetylglucosaminide 3-alpha-L-fucosyltransferase 9 from Homo sapiens (Human).